Consider the following 426-residue polypeptide: Dihydroorotase (426 aa).

Zn(2+)-binding residues include histidine 58 and histidine 60. Residues 60–62 (HLR) and asparagine 92 each bind substrate. Zn(2+) is bound by residues aspartate 150, histidine 177, and histidine 230. Asparagine 276 is a substrate binding site. Aspartate 303 lines the Zn(2+) pocket. Aspartate 303 is an active-site residue. Substrate-binding positions include histidine 307 and 321-322 (FG).

This sequence belongs to the metallo-dependent hydrolases superfamily. DHOase family. Class I DHOase subfamily. It depends on Zn(2+) as a cofactor.

The catalysed reaction is (S)-dihydroorotate + H2O = N-carbamoyl-L-aspartate + H(+). It participates in pyrimidine metabolism; UMP biosynthesis via de novo pathway; (S)-dihydroorotate from bicarbonate: step 3/3. Functionally, catalyzes the reversible cyclization of carbamoyl aspartate to dihydroorotate. This chain is Dihydroorotase, found in Listeria monocytogenes serovar 1/2a (strain ATCC BAA-679 / EGD-e).